The sequence spans 192 residues: Leucine-rich repeat-containing protein 51 (192 aa).

LRR repeat units follow at residues 49–71 (SLTQ…NQVV), 80–101 (NLAW…LTTF), and 103–124 (NLSV…NKLA). The LRRCT domain occupies 137–175 (NPIEEEKGYRQYVLCNLPRITTFDFSGVTKADRSTAEVW).

It localises to the cytoplasm. The polypeptide is Leucine-rich repeat-containing protein 51 (Rattus norvegicus (Rat)).